Here is a 746-residue protein sequence, read N- to C-terminus: Zinc finger protein 366 (746 aa).

A disordered region spans residues 1–64 (MQKAMKMVKD…FRYEPSPGDL (64 aa)). C2H2-type zinc fingers lie at residues 250–272 (WQCP…ILGH), 278–300 (HACS…MLTH), 306–328 (HKCQ…MMQH), 334–356 (HNCR…EAKH), 362–384 (NICV…LTTH), 390–412 (YNCS…MMKH), 418–440 (YICS…SLTH), 446–468 (HKCG…VLIH), 474–496 (YQCH…MIVH), 502–524 (FKCK…LHLH), and 530–553 (FKCL…KVKH). Residues 452–746 (GREFTLLANM…MEKQAVLLGI (295 aa)) are interaction with NRIP1. Residues 587-591 (PFDLS) carry the PXDLS motif. The segment at 587–689 (PFDLSQKRSA…DHEGSDIDCE (103 aa)) is disordered. Positions 613 to 627 (CQEEEEEAGEEDNCY) are enriched in acidic residues. Over residues 675–689 (EDRSEDHEGSDIDCE) the composition is skewed to basic and acidic residues.

As to quaternary structure, interacts with ESR1 and NRIP1. Interacts (via PXDLS motif) with CTBP1. Expressed in immature and mature dendritic cells (DCs).

The protein resides in the nucleus. In terms of biological role, has transcriptional repression activity. Acts as a corepressor of ESR1; the function seems to involve CTBP1 and histone deacetylases. This is Zinc finger protein 366 from Mus musculus (Mouse).